A 237-amino-acid polypeptide reads, in one-letter code: Purine nucleoside phosphorylase DeoD-type (237 aa).

Histidine 5 contributes to the a purine D-ribonucleoside binding site. Residues glycine 21, arginine 25, arginine 44, and arginine 88–serine 91 contribute to the phosphate site. A purine D-ribonucleoside contacts are provided by residues glutamate 180–glutamate 182 and serine 204–aspartate 205. Catalysis depends on aspartate 205, which acts as the Proton donor.

Belongs to the PNP/UDP phosphorylase family. As to quaternary structure, homohexamer; trimer of homodimers.

It catalyses the reaction a purine D-ribonucleoside + phosphate = a purine nucleobase + alpha-D-ribose 1-phosphate. The catalysed reaction is a purine 2'-deoxy-D-ribonucleoside + phosphate = a purine nucleobase + 2-deoxy-alpha-D-ribose 1-phosphate. Catalyzes the reversible phosphorolytic breakdown of the N-glycosidic bond in the beta-(deoxy)ribonucleoside molecules, with the formation of the corresponding free purine bases and pentose-1-phosphate. The protein is Purine nucleoside phosphorylase DeoD-type of Edwardsiella ictaluri (strain 93-146).